A 201-amino-acid polypeptide reads, in one-letter code: 3-isopropylmalate dehydratase small subunit (201 aa).

It belongs to the LeuD family. LeuD type 1 subfamily. As to quaternary structure, heterodimer of LeuC and LeuD.

It carries out the reaction (2R,3S)-3-isopropylmalate = (2S)-2-isopropylmalate. The protein operates within amino-acid biosynthesis; L-leucine biosynthesis; L-leucine from 3-methyl-2-oxobutanoate: step 2/4. Functionally, catalyzes the isomerization between 2-isopropylmalate and 3-isopropylmalate, via the formation of 2-isopropylmaleate. The sequence is that of 3-isopropylmalate dehydratase small subunit from Salmonella arizonae (strain ATCC BAA-731 / CDC346-86 / RSK2980).